A 43-amino-acid polypeptide reads, in one-letter code: DRDSCVDKSRCAKYGYYQQCEICCKKAGHRGGTCEFFKCKCKV.

4 disulfide bridges follow: C5/C23, C11/C34, C20/C39, and C24/C41.

This sequence belongs to the ergtoxin family. Gamma-KTx 3 subfamily. As to expression, expressed by the venom gland.

The protein localises to the secreted. Functionally, blocks Kv11/ERG potassium channels. The sequence is that of Potassium channel toxin gamma-KTx 3.2 from Centruroides elegans (Bark scorpion).